We begin with the raw amino-acid sequence, 172 residues long: 3-hydroxydecanoyl-[acyl-carrier-protein] dehydratase (172 aa).

Residue His-71 is part of the active site.

The protein belongs to the thioester dehydratase family. FabA subfamily. As to quaternary structure, homodimer.

The protein resides in the cytoplasm. It catalyses the reaction a (3R)-hydroxyacyl-[ACP] = a (2E)-enoyl-[ACP] + H2O. The enzyme catalyses (3R)-hydroxydecanoyl-[ACP] = (2E)-decenoyl-[ACP] + H2O. It carries out the reaction (2E)-decenoyl-[ACP] = (3Z)-decenoyl-[ACP]. The protein operates within lipid metabolism; fatty acid biosynthesis. Necessary for the introduction of cis unsaturation into fatty acids. Catalyzes the dehydration of (3R)-3-hydroxydecanoyl-ACP to E-(2)-decenoyl-ACP and then its isomerization to Z-(3)-decenoyl-ACP. Can catalyze the dehydratase reaction for beta-hydroxyacyl-ACPs with saturated chain lengths up to 16:0, being most active on intermediate chain length. In Proteus mirabilis (strain HI4320), this protein is 3-hydroxydecanoyl-[acyl-carrier-protein] dehydratase.